A 4074-amino-acid polypeptide reads, in one-letter code: MIVWLISLMSIEILLLAGPALSFHIEPKEGSLAGGTWITVIFDGLELEQLYPTNGSQLEIHLVNVAVPALPSIPCDVSPVFLDLPVVMCRTRSLLPEVHEGLYYLEAHAGGQVVGSPSPGLQDCCTFKFSREQTPIVYQVTPPSGVPGKMIHVYGWIITGRSETFDFDAEYIDSPLILEAQGDKWVTACSLINRQTGSCYPLQENHGLGTLQCRVEGNYIGSQNVSFSVFNKGKSMVHKNAWLVSAKLDLFLYQTYSEILSVFPETGSLGGKTDIIITGDFFDNPALVTIAGVPCDIRHMSPRKIECTTRAPGKRARLTAPQAGNRGLLFEVGEAVEGLDLTVATPGYRWQIVPNASSPFGFWFKEGQPFRARLSGFFVAPETNNYTFWIQADNQASLYFSQSEDPRMKVKVASIRVGTADWFDAWEQDRNEGVWQRKTPKLELVGGTRYYLEAEHYGRTPSRGMRIGVQIHNTWLNPDVVSTYLREKHQIRVRAQRLPEIQMLTVSGRGSFFLTWDNVTSQPIPENATAHQIQTAIEELLAVKCKLEPLSANILLWLGFEQGPEGSSFEGDLTSGTEPFCGRFSLHQPRRLVLTPPAAQKDYWLDRYTHLCIAYKGRMKNILKVTVFFTTDFQNFIKKNITCDWNLVGTRPNSWQFTCTDLWETCVHHSMYLQPPLVDSPVLVHRIDLFPLSQETSGFYVDEIIIADTNITVSQADSETAHPGGNLVESLCVVGSPPVYNISFWLVGCGQELPLITASIVPTGGEARRSGLVQVTTQRIQKTSPPLGGYFHIQLPTSVIPDVPVHISASHLRKLLQNNADNFTSRYLNSSDLTVMEDLKSCYEHEWTLSWSSQVGDLPNFIRVSDANLTGVNPAATVRVVYDGGVFLGPVFGDMLVTANQHTQVVVRVNDIPAHCSGSCSFQYLEGSTPQIHSAWYSLDGDISLLIYIFGINFSGDPQALEIMVNKTNCKVIFSNQTNVICQTDLLPVGMHRLFMVVRPFGRAINTSGEALFLSVEPRLDAVEPSRAAEIGGLWATIQGSGLEDVSLVLFGSQSCAINITTSNSRRIQCRVPPRGKDGPVVNLTVVSGDHSAVLPMAFTYVSSLNPVITSLSRNRSNIAGGDTLFIRMALLVNYTDLDVEVCIQNTLAPAHVQMPQGLEVVLPPLPAGLYSISVSINGISIRSPGVDLHIQYITEVFSIEPCCGSLLGGTILSISGIGFIRDPTLVWVFVGNRSCDILNSTETVIWCETPPAALLPDSNIPAIPVPMEIWAGNVSFARESLLNLSFTFLYEAAMTPVVTAMRGEIINNSLRFYVEGNNLSNSVILLGVSHCDLETQTLRNNVSLSGCSFPLHSLEAGFYPLQVRQKQMGFANMSAVPQQYVITPWIMAISPTHGSACGGTVLTVRGLALSSRKRSVQVDLLGPFTCVILSLGHQTILCQINKVNDSFPDVSFTLNVTVIVNGLPSECQGNCTLFLQEETTPIVDSLTTNISGSLTMVLIRGRKLGITAVEPMVFVDDHLPCIVTFFNASYVICWISDLTPGLHYVSVFHARNGYACFGNVSRHFYILPQVFHYFPKNFSIHGGSLLTVEGTALRGKNSTLVYVGQQACLTVSISTELIQCIVPAGNGSVGLVIEVDGLSYQMGVIGYSSAFTPRLLSISQTDDVLTFAVAQVSGAENVDIFIGMSPCVGISGNHTVLQCVVSSLPAGEYPVRGYDRMRGWASSVLVFTSTATISGVTENFGCLGGRLVHVFGAGFSPGNVSAAVCGAPCQVLANATVSAFSCLVLPLNVSLAFLCGLKHSEESCEASSSTYVQCDLTVTVGTETLPQSWPYLYICEESPQCLFAPDHWTESTFPWFSGLFISPKVERDEVLIYNSSCNIAMETEAKMECETPNQPITAKITEIRKSRGQSTQGNFSLQFCLRWSRTHSWFPERVPQDGDNVTVENGQLLLLDTNTSILNLLHIKGGKLIFMDPGPIELRAHAILISDGGELRIGSEDKPFQGKAEIKLYGSSHSTPFFPYGVKFLAVRNGTLSLHGLLPEVTFTHLQAAAYAGDTVLALEDAVDWHPGDEAVIISRIGVGGAKPMEEIVIVEAVHNTDLYLRSPLRYSHNFTENWVAGVLHILKVTVVLLSRSITIQGNLTAERMKHLASCQEASDSEGNLQDCLYSKSEKMLGSRDLGARVIVQSFPEEPSRVQLRGVQFRDLGQAFRKHVSALTLVGAMRDSYVQGCTVWSSFNRGLSMSMTLGLKVDSNIFYNILGHALLVGTDMDIKYISWEAAPEKKPDWSEQGNIIRNNVIISISGTEGLSSPEMLTPSGIYILNPTNVVEGNRVYVAGLGYFFHLVTSQTSQAPLLSFTQNIAHSCTRYGLFIYPQFQPPWDDGRGPTLFQNFTVWGSAGGARISRSSNLHLKNFQVYSCRDFGIDILESDANTSVTDSLLLGHFAHKGSLCMSAGIKTPKRWELIISNTTFVNFDLTDCVSIRTCSGCSRGQGGFTVKTNQLKFINSPNLVAFPFPHAAILEDLDGSLSGRNRSHILASMETLSASCLVNLSFSQIVPGSVCGEDVIFHHMSIGLANAPNVSYDLTITDSRNKTTTVNYVRDTLSNLYGWMALLLDQETYSLQFETPWISRSLQYSATFGSFAPGNYLLLVHTVLWPYPDILVRCGSQEGRSLPSLPLPGQDQGCDWFFNTQLRQLIYLVSGEGQVQVTLQVKEGVPPTISASTSAPESALKWSLPEAWTGIEEGWGGHNHTIPGPGDDILILPNRTVLVDTNLPFLKGLYVMGTLEFPVDRSNVLSVACMVIAGGELKVGTLDNPLEKEQKLLILLRASEGIFCDRLNGIHIDPGTIGVYGKVQLHGACPKKSWTRLAADIASGNERIIVEDAVDWRPHDKIVLSSSSYEPHEAEILTVKEVQAHHVKIYERLKYRHIGSVHVMEDGRCIRLAAEVGLLTRNIQIQPDISCRARLLVGSFRNSSSKEFSGVLQLSNVEIQNFGSPLYSSIEFTNASAGSWIISSSLHQSCSGGIRAAASHGIILNDNIVFGTVGHGIDLEGQNFSLSNNLVVLMTQSAWSTVWVAGIKANQAKDINLYGNVVAGSERIGFHIQGHRCSSPEARWSDNVAHSSLHGLHLYKENGLDNCTGISGFLAFKNFDYGAMLHVENSVEIENITLVDNSIGLLATVYVSSVPKSHIENVQIVLRNSVIIATSSSFDCIQDRVKPRSANLTSSDRAPSNPRGGRVGILWPIFTSEPNWWPQEPWHRVRNGHSTSGILKLQDVTFSNFVKSCYSDDLDICILPNVENTGIMHPIMAEGTRMLKIKDKNKFYFPPLQARKGLGILVCPESDCENPRKYLFKDLDGRALGLPPPVSVFPKTEAEWTGSFFNTGTFREEQKCTYRALIQGYICKQSDQAILILDNADATWAMQKLYPVVSVTRGFVDTFSSVNADAPCSTSGSASTFYSILPTREITKICFVDQTPQVLRFFLLGNRSTSKLLLAVFYHELQNPRVFIGESFIPPIMVQSTSSLLDESIGSNYFSILDNLLYVVLQGQEPIEIHSGVSIHLALTVMFSVLEKGWEIIILERLTDFLQVSQDQIRFIHEMPGNEATLKAIADNKAKRKRNCPTVTCASPYRVGQRRPLMTEMSSYRVPSPTIMETASKVIVIEIGDLPTIRSTRLISYLTSNKLQNLAHQIITAQQTGVLENVLNMTIGALLVTQPKGVTDYGNASSFKTGNFIYIRPYALSVLVQPSDGEVGKELTVQPRLVFLDKQNQRIESLGPPSEPWAISVSLEGTSDPVLKGCTQAESQDGYVSFSNLAVLISGSNWHFIFTVTSPPGANFTARSRSFTVLPAAPSEKSSIILAVSLCSVASWLALCCLVCCWFRKSKSRKIKSEDISEFKTNDQKSHIHMSSKHPRSQETKKEDTMMGEDMKIKVIMDKVNQLPHQSLNGVSRRKVSRRAVREEGSSREEDVVPAPRIISITSQGHTCVPGSPDQQIYLQEAGNWKEAQEQLVSYQLAGQDQRLLLCPDLRRERQQLQGQSQLGQEGGSVGLSQEKKASGGATQASCPHLVHPETIQEQL.

The N-terminal stretch at 1–22 (MIVWLISLMSIEILLLAGPALS) is a signal peptide. N-linked (GlcNAc...) asparagine glycans are attached at residues asparagine 54 and asparagine 224. Positions 258–310 (EILSVFPETGSLGGKTDIIITGDFFDNPALVTIAGVPCDIRHMSPRKIECTTR) constitute an IPT/TIG 1 domain. A PA14 domain is found at 323–483 (AGNRGLLFEV…TWLNPDVVST (161 aa)). Residues asparagine 355, asparagine 385, asparagine 518, asparagine 527, asparagine 640, asparagine 710, asparagine 741, asparagine 822, asparagine 829, asparagine 868, asparagine 953, asparagine 966, asparagine 976, asparagine 1006, asparagine 1059, asparagine 1083, asparagine 1115, asparagine 1134, asparagine 1233, asparagine 1240, asparagine 1274, asparagine 1284, asparagine 1308, asparagine 1319, asparagine 1342, asparagine 1373, asparagine 1445, asparagine 1456, asparagine 1471, asparagine 1490, asparagine 1528, asparagine 1560, asparagine 1578, asparagine 1598, asparagine 1627, asparagine 1694, asparagine 1760, asparagine 1775, asparagine 1789, asparagine 1875, asparagine 1915, asparagine 1941, asparagine 1955, asparagine 2030, asparagine 2111, and asparagine 2140 are each glycosylated (N-linked (GlcNAc...) asparagine). One can recognise an IPT/TIG 2 domain in the interval 944–1000 (SLLIYIFGINFSGDPQALEIMVNKTNCKVIFSNQTNVICQTDLLPVGMHRLFMVVRP). IPT/TIG domains are found at residues 1018-1101 (PRLD…AFTY), 1107-1186 (PVIT…RSPG), and 1199-1274 (SIEP…WAGN). The IPT/TIG 6 domain occupies 1385–1464 (PWIMAISPTH…LNVTVIVNGL (80 aa)). Positions 1573–1641 (HYFPKNFSIH…LVIEVDGLSY (69 aa)) constitute an IPT/TIG 7 domain. A G8 1 domain is found at 1928–2049 (HSWFPERVPQ…PEVTFTHLQA (122 aa)). PbH1 repeat units lie at residues 2245 to 2267 (TLGL…LVGT), 2288 to 2322 (EQGN…YILN), 2351 to 2373 (APLL…FIYP), 2383 to 2404 (RGPT…RISR), and 2405 to 2427 (SSNL…DILE). Residue asparagine 2390 is glycosylated (N-linked (GlcNAc...) asparagine). N-linked (GlcNAc...) asparagine glycans are attached at residues asparagine 2431, asparagine 2467, asparagine 2531, asparagine 2549, asparagine 2579, asparagine 2591, asparagine 2749, asparagine 2764, asparagine 2972, and asparagine 3004. The PbH1 6 repeat unit spans residues 2460-2483 (RWELIISNTTFVNFDLTDCVSIRT). Residues 2743–2869 (EGWGGHNHTI…PKKSWTRLAA (127 aa)) form the G8 2 domain. Residues 3029 to 3051 (SHGIILNDNIVFGTVGHGIDLEG) form a PbH1 7 repeat. N-linked (GlcNAc...) asparagine glycosylation is present at asparagine 3053. One copy of the PbH1 8 repeat lies at 3082-3104 (AKDINLYGNVVAGSERIGFHIQG). Residues asparagine 3136, asparagine 3165, asparagine 3221, asparagine 3484, asparagine 3702, asparagine 3721, and asparagine 3833 are each glycosylated (N-linked (GlcNAc...) asparagine). One copy of the PbH1 9 repeat lies at 3158–3183 (ENSVEIENITLVDNSIGLLATVYVSS). The chain crosses the membrane as a helical span at residues 3854–3874 (IILAVSLCSVASWLALCCLVC). The tract at residues 3871 to 3888 (CLVCCWFRKSKSRKIKSE) is ciliary targeting sequence (CST). Disordered regions lie at residues 3896–3919 (NDQK…KEDT), 3943–3965 (NGVS…REED), and 4031–4074 (LQGQ…QEQL). Composition is skewed to basic and acidic residues over residues 3910-3919 (RSQETKKEDT) and 3954-3965 (AVREEGSSREED). Positions 3947-3976 (RRKVSRRAVREEGSSREEDVVPAPRIISIT) are nuclear localization signal (NLS).

As to quaternary structure, interacts with CAMLG. Interacts with PKD2. Interacts (via CST) with ARF4; this interaction allows an efficient PKHD1 trafficking to the cilium. Interacts (via CST) with RAB8A; this interaction controls trafficking through the endomembrane systeme and to the cilium. Interacts (via CST) with TULP3; this interaction allows PKHD1 trafficking to the cilium. Palmitoylated. Palmitoylation facilitates the trafficking to the cilia and membrane targeting. Post-translationally, N-glycosylated. In terms of processing, several proteolytic cleavages occur within the extracellular domain, whereas at least one cleavage occurs within the cytoplasmic domain. Cleaved by a probable proprotein convertase which produces an extracellular domain (polyductin extracellular domain, (PECD)) and a C-terminal fragment (polyductin transmembrane fragment (PTM)) which are tethered together by disulfide bonds. This extracellular domain (PECD) is then shed from the primary cilium by activation of a member of the ADAM metalloproteinase disintegrins family, resulting in concomitant release of an intra-cellular C-terminal fragment (ICD) via a gamma-secretase-dependent process. The proteolytic cleavage of the C-terminal intracellular fragment (ICD) is controlled by cytosolic calcium concentration and activation of PKC.

The protein resides in the cell membrane. Its subcellular location is the cytoplasm. It is found in the apical cell membrane. It localises to the cytoskeleton. The protein localises to the cilium basal body. The protein resides in the cell projection. Its subcellular location is the cilium. It is found in the spindle. It localises to the chromosome. The protein localises to the centromere. The protein resides in the nucleus. Its subcellular location is the secreted. It is found in the extracellular exosome. It localises to the endoplasmic reticulum. The protein localises to the golgi apparatus. Its function is as follows. Promotes ciliogenesis in renal epithelial cells and therefore participates in the tubules formation and/ or ensures the maintenance of the architecture of the lumen of the kidney. Has an impact on cellular symmetry by ensuring correct bipolar cell division through the regulation of centrosome duplication and mitotic spindle assembly and by maintaining oriented cell division (OCD) during tubular elongation through planar cell polarity (PCP) pathway. During epithelial cell morphogenesis, it also regulates cell-cell and cell-matrix adhesion and participates in cell motility. Promotes cell-cell contact through the positive regulation of PTK2 kinase activity leading to either positive regulation of epithelial cell proliferation through the HRAS/RAF1 pathways, or negative regulation of apoptosis through the PDK1/AKT1 pathway. May act in collecting-duct and biliary differentiation. May participate in the regulation of the cholangiocytes proliferation and the CCN2 production in an CXCL8-dependent manner. The polypeptide is Fibrocystin (Canis lupus familiaris (Dog)).